The sequence spans 366 residues: Endogenous Bornavirus-like nucleoprotein 1 (366 aa).

The span at 1-15 (MSRPRNNPQTSSPQD) shows a compositional bias: polar residues. The segment at 1–22 (MSRPRNNPQTSSPQDSTKDGSS) is disordered.

As to expression, expression detected by RT-PCR in a few cell lines, including OL, HEK293T and MOLT-4. Not observed in HeLa cells.

Its function is as follows. May act as an RNA-binding protein. Highly homologous to the bornavirus nucleocapsid N protein that binds viral RNA and oligomerizes. The sequence is that of Endogenous Bornavirus-like nucleoprotein 1 (EBLN1) from Homo sapiens (Human).